A 92-amino-acid chain; its full sequence is Putative phosphotransferase enzyme IIB component SgcB (92 aa).

The PTS EIIB type-2 domain maps to 1-92 (MKKILVACGT…KQQIKALLTQ (92 aa)). The active-site Phosphocysteine intermediate is the cysteine 8.

The protein resides in the cytoplasm. The phosphoenolpyruvate-dependent sugar phosphotransferase system (sugar PTS), a major carbohydrate active -transport system, catalyzes the phosphorylation of incoming sugar substrates concomitantly with their translocation across the cell membrane. The sequence is that of Putative phosphotransferase enzyme IIB component SgcB (sgcB) from Escherichia coli (strain K12).